The sequence spans 564 residues: Proline--tRNA ligase (564 aa).

It belongs to the class-II aminoacyl-tRNA synthetase family. ProS type 1 subfamily. In terms of assembly, homodimer.

Its subcellular location is the cytoplasm. It catalyses the reaction tRNA(Pro) + L-proline + ATP = L-prolyl-tRNA(Pro) + AMP + diphosphate. Catalyzes the attachment of proline to tRNA(Pro) in a two-step reaction: proline is first activated by ATP to form Pro-AMP and then transferred to the acceptor end of tRNA(Pro). As ProRS can inadvertently accommodate and process non-cognate amino acids such as alanine and cysteine, to avoid such errors it has two additional distinct editing activities against alanine. One activity is designated as 'pretransfer' editing and involves the tRNA(Pro)-independent hydrolysis of activated Ala-AMP. The other activity is designated 'posttransfer' editing and involves deacylation of mischarged Ala-tRNA(Pro). The misacylated Cys-tRNA(Pro) is not edited by ProRS. The sequence is that of Proline--tRNA ligase from Xylella fastidiosa (strain Temecula1 / ATCC 700964).